Consider the following 767-residue polypeptide: Photosystem I P700 chlorophyll a apoprotein A1 (767 aa).

The next 8 helical transmembrane spans lie at 72–95 (IFSAHFGHLAVIFIWLSGAFFHGA), 158–181 (LMALAIGALVMAGLMLNAGVFHYH), 197–221 (LNHHLAGLLGLGSLSWAGHLIHVSL), 305–323 (IAHHHVAIAVLFIVAGHMY), 364–387 (WHAQLAVNLAMLGSLSIIVAQHMY), 403–429 (IGLFTHHIWIGGFLIVGGAAHAAIAMV), 451–473 (AIISHLNWVCIWLGAHSFGLYIH), and 548–566 (FMVHHIHAFTIHVTVLILL). Cysteine 590 and cysteine 599 together coordinate [4Fe-4S] cluster. 2 helical membrane passes run 606–627 (HVFLGLFWMYNSLSIVIFHFSW) and 681–703 (TSAYGIMFLGAHFIWAFSLMFLF). Histidine 692 provides a ligand contact to chlorophyll a'. Residues methionine 700 and tyrosine 708 each contribute to the chlorophyll a site. Position 709 (tryptophan 709) interacts with phylloquinone. A helical transmembrane segment spans residues 741-761 (AVGVAHYLLGGIATTWAFFHA).

It belongs to the PsaA/PsaB family. In terms of assembly, the PsaA/B heterodimer binds the P700 chlorophyll special pair and subsequent electron acceptors. PSI consists of a core antenna complex that captures photons, and an electron transfer chain that converts photonic excitation into a charge separation. The cyanobacterial PSI reaction center is composed of one copy each of PsaA,B,C,D,E,F,I,J,K,L,M and X, and forms trimeric complexes. Requires PSI electron transfer chain: 5 chlorophyll a, 1 chlorophyll a', 2 phylloquinones and 3 4Fe-4S clusters. PSI core antenna: 90 chlorophyll a, 22 carotenoids, 3 phospholipids and 1 galactolipid. P700 is a chlorophyll a/chlorophyll a' dimer, A0 is one or more chlorophyll a, A1 is one or both phylloquinones and FX is a shared 4Fe-4S iron-sulfur center. as cofactor.

It localises to the cellular thylakoid membrane. The catalysed reaction is reduced [plastocyanin] + hnu + oxidized [2Fe-2S]-[ferredoxin] = oxidized [plastocyanin] + reduced [2Fe-2S]-[ferredoxin]. In terms of biological role, psaA and PsaB bind P700, the primary electron donor of photosystem I (PSI), as well as the electron acceptors A0, A1 and FX. PSI is a plastocyanin/cytochrome c6-ferredoxin oxidoreductase, converting photonic excitation into a charge separation, which transfers an electron from the donor P700 chlorophyll pair to the spectroscopically characterized acceptors A0, A1, FX, FA and FB in turn. Oxidized P700 is reduced on the lumenal side of the thylakoid membrane by plastocyanin or cytochrome c6. The chain is Photosystem I P700 chlorophyll a apoprotein A1 from Synechococcus sp. (strain CC9902).